We begin with the raw amino-acid sequence, 587 residues long: ATF/CREB activator 2 (587 aa).

4 disordered regions span residues methionine 1 to leucine 62, leucine 123 to serine 144, asparagine 169 to alanine 195, and threonine 381 to threonine 423. Positions lysine 16–serine 29 are enriched in basic and acidic residues. 2 stretches are compositionally biased toward low complexity: residues serine 39–alanine 57 and leucine 123–glutamine 134. 2 positions are modified to phosphoserine: serine 171 and serine 179. A compositionally biased stretch (basic and acidic residues) spans asparagine 385–histidine 395. Over residues serine 396–asparagine 418 the composition is skewed to polar residues. Serine 399 is modified (phosphoserine). Residues alanine 425–histidine 488 form the bZIP domain. The tract at residues lysine 427–lysine 447 is basic motif. Residues leucine 453 to leucine 467 form a leucine-zipper region. The tract at residues serine 552–lysine 587 is disordered. Position 557 is a phosphoserine (serine 557). Phosphothreonine is present on threonine 559. The segment covering aspartate 565–aspartate 576 has biased composition (basic and acidic residues). Positions asparagine 577–lysine 587 are enriched in polar residues.

This sequence belongs to the bZIP family.

The protein resides in the nucleus. In terms of biological role, transcriptional activator of promoters containing ATF/CREB sites. Can independently stimulate transcription through ATF/CREB sites. Important for a variety of biological functions including growth on non-optimal carbon sources. The chain is ATF/CREB activator 2 (CST6) from Saccharomyces cerevisiae (strain ATCC 204508 / S288c) (Baker's yeast).